The primary structure comprises 89 residues: DNA-directed RNA polymerase subunit Rpo6 (89 aa).

Belongs to the archaeal Rpo6/eukaryotic RPB6 RNA polymerase subunit family. In terms of assembly, part of the 13-subunit RNA polymerase complex.

It is found in the cytoplasm. It catalyses the reaction RNA(n) + a ribonucleoside 5'-triphosphate = RNA(n+1) + diphosphate. DNA-dependent RNA polymerase (RNAP) catalyzes the transcription of DNA into RNA using the four ribonucleoside triphosphates as substrates. Its function is as follows. Reconstitution experiments show this subunit is required for basic activity. This chain is DNA-directed RNA polymerase subunit Rpo6, found in Sulfolobus acidocaldarius (strain ATCC 33909 / DSM 639 / JCM 8929 / NBRC 15157 / NCIMB 11770).